The chain runs to 130 residues: Capsid protein (130 aa).

The viral RNA-binding stretch occupies residues 31-104 (EWLSNNSRSQ…FAATDDVTVI (74 aa)).

It belongs to the Leviviricetes capsid protein family. As to quaternary structure, homodimer. The capsid proteins form dimers that assemble by group of 5. Twelve such pentamers are linked together with free dimers. The homodimers binds to the viral RNA via an operator hairpin, but also to many other RNA sequences in the viral genome; this interaction probably shifts the virus from the replicative to the assembly phase and ensures specific encapsidation of the viral genome.

The protein resides in the virion. Capsid protein self-assembles to form an icosahedral capsid with a T=3 symmetry, about 26 nm in diameter, and consisting of 89 capsid proteins dimers (178 capsid proteins). Involved in viral genome encapsidation through the interaction between a capsid protein dimer and the multiple packaging signals present in the RNA genome. The capsid also contains 1 copy of the A2 maturation protein. Functionally, acts as a translational repressor of viral replicase synthesis late in infection. This latter function is the result of capsid protein interaction with an RNA hairpin which contains the replicase ribosome-binding site. The protein is Capsid protein of Escherichia coli (Bacteriophage JP34).